Here is a 159-residue protein sequence, read N- to C-terminus: Transcription elongation factor GreA (159 aa).

Residues 14–76 (IKKLENELEY…QLENMLKNAS (63 aa)) are a coiled coil.

The protein belongs to the GreA/GreB family.

Its function is as follows. Necessary for efficient RNA polymerase transcription elongation past template-encoded arresting sites. The arresting sites in DNA have the property of trapping a certain fraction of elongating RNA polymerases that pass through, resulting in locked ternary complexes. Cleavage of the nascent transcript by cleavage factors such as GreA or GreB allows the resumption of elongation from the new 3'terminus. GreA releases sequences of 2 to 3 nucleotides. This is Transcription elongation factor GreA from Clostridium kluyveri (strain NBRC 12016).